Reading from the N-terminus, the 288-residue chain is RanBP2-type zinc finger protein At1g67325 (288 aa).

Residues 1 to 11 (MSQVDNRNSSA) are compositionally biased toward polar residues. Disordered regions lie at residues 1–24 (MSQV…RRED), 52–77 (PADH…GAYL), 176–198 (MPRP…DNDW), 222–248 (PKPG…WKCD), and 265–288 (NCGA…ENDQ). The span at 15–24 (ARTDGGRRED) shows a compositional bias: basic and acidic residues. 3 RanBP2-type zinc fingers span residues 22-53 (REDD…PRPA), 194-225 (RDND…PKPG), and 241-272 (PEGS…DKPG). Basic and acidic residues predominate over residues 181–197 (FYPDEKSQKRDSTRDND). The segment covering 223–241 (KPGSQQGGSSDKISKQNAP) has biased composition (polar residues). At Ser-278 the chain carries Phosphoserine.

This Arabidopsis thaliana (Mouse-ear cress) protein is RanBP2-type zinc finger protein At1g67325.